Here is a 324-residue protein sequence, read N- to C-terminus: tRNA N6-adenosine threonylcarbamoyltransferase (324 aa).

Residues H107, H111, and Y127 each contribute to the Fe cation site. Residues 127–131 (YVSGG), D159, G172, E176, and N257 contribute to the substrate site. Fe cation is bound at residue D285.

It belongs to the KAE1 / TsaD family. As to quaternary structure, monomer. Component of the KEOPS complex that consists of Kae1, Bud32, Cgi121 and Pcc1; the whole complex dimerizes. Fe(2+) is required as a cofactor.

Its subcellular location is the cytoplasm. The enzyme catalyses L-threonylcarbamoyladenylate + adenosine(37) in tRNA = N(6)-L-threonylcarbamoyladenosine(37) in tRNA + AMP + H(+). In terms of biological role, required for the formation of a threonylcarbamoyl group on adenosine at position 37 (t(6)A37) in tRNAs that read codons beginning with adenine. Is a component of the KEOPS complex that is probably involved in the transfer of the threonylcarbamoyl moiety of threonylcarbamoyl-AMP (TC-AMP) to the N6 group of A37. Kae1 likely plays a direct catalytic role in this reaction, but requires other protein(s) of the complex to fulfill this activity. In vitro, binds tRNA, ssRNA, both single- and double-stranded DNA, and exhibits a low ATPase activity. In Pyrococcus abyssi (strain GE5 / Orsay), this protein is tRNA N6-adenosine threonylcarbamoyltransferase.